The sequence spans 579 residues: SHC-transforming protein 1 (579 aa).

Methionine 1 is modified (N-acetylmethionine). Residues 1 to 137 (MDLLPPKPKY…QLGGEEWTRH (137 aa)) form a disordered region. Low complexity predominate over residues 16 to 44 (ESLSSLEEGASGSTPPEELPSPSASSLGP). A phosphoserine mark is found at serine 36 and serine 139. N6-acetyllysine is present on lysine 154. One can recognise a PID domain in the interval 156–339 (MGPGVSYLVR…AGFDGSAWDE (184 aa)). The disordered stretch occupies residues 337-357 (WDEEEEEPPDHQYYNDFPGKE). The segment at 340–483 (EEEEPPDHQY…SMAEQLQGEP (144 aa)) is CH1. Phosphotyrosine is present on residues tyrosine 349, tyrosine 350, and tyrosine 423. A disordered region spans residues 432 to 451 (ARQAGGGAGPPNPSLNGSAP). Serine 449 is subject to Phosphoserine. The SH2 domain maps to 484-575 (WFHGKLSRRE…GSELCLQQPV (92 aa)).

In terms of assembly, interacts with CPNE3; this interaction may mediate the binding of CPNE3 with ERBB2. Interacts with the NPXY motif of tyrosine-phosphorylated IGF1R and INSR in vitro via the PID domain. Once activated, binds to GRB2. Interacts with tyrosine-phosphorylated DDR2 and CD3T. Interacts with the N-terminal region of APS. Interacts with GRB7 and KIT. Interacts with PTK2/FAK1. Interacts with phosphorylated LRP1 and IRS4. Interacts with FLT4 (tyrosine-phosphorylated). Interacts with PDGFRB (tyrosine-phosphorylated). Interacts with ERBB4. Interacts with TEK/TIE2 (tyrosine-phosphorylated). Interacts with ALK, GAB2, TRIM31, INPP5D/SHIP1 and INPPL1/SHIP2. Interacts with PTPN6/SHP (tyrosine phosphorylated). Identified in a complex containing FGFR4, NCAM1, CDH2, PLCG1, FRS2, SRC, SHC1, GAP43 and CTTN. Interacts with EPHB1 and GRB2; activates the MAPK/ERK cascade to regulate cell migration. Interacts with the Trk receptors NTRK1, NTRK2 and NTRK3; in a phosphotyrosine-dependent manner. Interacts with CEACAM1; this interaction is CEACAM1-phosphorylation-dependent and mediates interaction with EGFR or INSR resulting in decrease coupling of SHC1 to the MAPK3/ERK1-MAPK1/ERK2 pathway. Interacts (via PID domain) with PEAK1 (when phosphorylated at 'Tyr-1177'). Found in a complex with PPP1CA, PPP1CC, SHC1 and PEAK1. Phosphorylated in response to FLT4 signaling. Tyrosine phosphorylated by ligand-activated PDGFRB. May be tyrosine phosphorylated by activated PTK2/FAK1. Tyrosine phosphorylated by TEK/TIE2. Tyrosine phosphorylated by activated PTK2B/PYK2. Dephosphorylation by PTPN2 may regulate interaction with GRB2. Phosphorylated by activated epidermal growth factor receptor. Phosphorylated in response to KIT signaling. Isoform p47Shc and isoform p52Shc are phosphorylated on tyrosine residues of the Pro-rich domain. Isoform p66Shc is phosphorylated on Ser-36 by PRKCB upon treatment with insulin, hydrogen peroxide or irradiation with ultraviolet light. FLT3 signaling promotes tyrosine phosphorylation of isoform p47Shc and isoform p52Shc. Also tyrosine phosphorylated by ligand-activated ALK. Widely expressed. Expressed in neural stem cells but absent in mature neurons.

The protein localises to the cytoplasm. The protein resides in the cell junction. Its subcellular location is the focal adhesion. It is found in the mitochondrion matrix. It localises to the mitochondrion. In terms of biological role, signaling adapter that couples activated growth factor receptors to signaling pathways. Participates in signaling downstream of the angiopoietin receptor TEK/TIE2, and plays a role in the regulation of endothelial cell migration and sprouting angiogenesis. Participates in a signaling cascade initiated by activated KIT and KITLG/SCF. Isoform p47Shc and isoform p52Shc, once phosphorylated, couple activated receptor kinases to Ras via the recruitment of the GRB2/SOS complex and are implicated in the cytoplasmic propagation of mitogenic signals. Isoform p47Shc and isoform p52 may thus function as initiators of the Ras signaling cascade in various non-neuronal systems. Isoform p66Shc does not mediate Ras activation, but is involved in signal transduction pathways that regulate the cellular response to oxidative stress and life span. Isoform p66Shc acts as a downstream target of the tumor suppressor p53 and is indispensable for the ability of stress-activated p53 to induce elevation of intracellular oxidants, cytochrome c release and apoptosis. The expression of isoform p66Shc has been correlated with life span. This chain is SHC-transforming protein 1 (Shc1), found in Mus musculus (Mouse).